The following is a 209-amino-acid chain: MITSNFKTQENVSQAITLASWLAGEYSSIKYTLEDARTNPHIRIFFRPLPYDFFGGIGFYSEEIYDHDPWHPHYQFVKRVIPQGDSVRVENYALKDPDLHTGAGQDLEILATLTPDNIELRKGCAMIFKRQGDTFVGGVEPGHKCLIPRGDGSMTYLVSEVKVTQKTWTSRDTGYDVNTHEKIWGSNSGPFKFDKVQDFSGEIPDIAIL.

This sequence belongs to the CpcT/CpeT biliprotein lyase family.

Covalently attaches a chromophore to Cys residue(s) of phycobiliproteins. This Trichodesmium erythraeum (strain IMS101) protein is Chromophore lyase CpcT/CpeT 1.